Reading from the N-terminus, the 222-residue chain is Nucleoside triphosphate pyrophosphatase (222 aa).

D82 functions as the Proton acceptor in the catalytic mechanism.

The protein belongs to the Maf family. A divalent metal cation is required as a cofactor.

The protein resides in the cytoplasm. The enzyme catalyses a ribonucleoside 5'-triphosphate + H2O = a ribonucleoside 5'-phosphate + diphosphate + H(+). It catalyses the reaction a 2'-deoxyribonucleoside 5'-triphosphate + H2O = a 2'-deoxyribonucleoside 5'-phosphate + diphosphate + H(+). Functionally, nucleoside triphosphate pyrophosphatase. May have a dual role in cell division arrest and in preventing the incorporation of modified nucleotides into cellular nucleic acids. The sequence is that of Nucleoside triphosphate pyrophosphatase from Mycobacterium tuberculosis (strain ATCC 25177 / H37Ra).